The chain runs to 328 residues: Gonadotropin-releasing hormone receptor (328 aa).

Over 1 to 38 the chain is Extracellular; it reads MANGDSPDQNENHCSAINSSILLTPGSLPTLTLSGKIR. N-linked (GlcNAc...) asparagine glycosylation occurs at Asn18. The chain crosses the membrane as a helical span at residues 39-58; that stretch reads VTVTFFLFLLSTIFNTSFLL. The Cytoplasmic segment spans residues 59–77; it reads KLQNWTQRKEKRKKLSKMK. Residues 78 to 97 form a helical membrane-spanning segment; sequence VLLKHLTLANLLETLIVMPL. At 98–115 the chain is on the extracellular side; it reads DGMWNITVQWYAGELLCK. Residue Asn102 is glycosylated (N-linked (GlcNAc...) asparagine). Cys114 and Cys196 form a disulfide bridge. The chain crosses the membrane as a helical span at residues 116–137; the sequence is VLSYLKLFSMYAPAFMMVVISL. The Cytoplasmic portion of the chain corresponds to 138–164; it reads DRSLAITRPLAVKSNSKLGQFMIGLAW. A helical transmembrane segment spans residues 165-184; the sequence is LLSSIFAGPQLYIFGMIHLA. Residues 185–212 lie on the Extracellular side of the membrane; sequence DDSGQTEGFSQCVTHCSFPQWWHQAFYN. Residues 213–232 traverse the membrane as a helical segment; it reads FFTFSCLFIIPLLIMLICNA. Residues 233-281 are Cytoplasmic-facing; that stretch reads KIIFTLTRVLHQDPHKLQLNQSKNNIPQARLRTLKMTVAFATSFTVCWT. The helical transmembrane segment at 282-300 threads the bilayer; it reads PYYVLGIWYWFDPDMVNRV. Residues 301–306 lie on the Extracellular side of the membrane; the sequence is SDPVNH. The helical transmembrane segment at 307 to 326 threads the bilayer; sequence FFFLFAFLNPCFDPLIYGYF. Over 327–328 the chain is Cytoplasmic; that stretch reads SL.

This sequence belongs to the G-protein coupled receptor 1 family.

The protein localises to the cell membrane. Its function is as follows. Receptor for gonadotropin releasing hormone (GnRH) that mediates the action of GnRH to stimulate the secretion of the gonadotropic hormones luteinizing hormone (LH) and follicle-stimulating hormone (FSH). This receptor mediates its action by association with G-proteins that activate a phosphatidylinositol-calcium second messenger system. The sequence is that of Gonadotropin-releasing hormone receptor (GNRHR) from Ovis aries (Sheep).